The primary structure comprises 1208 residues: Neural cell adhesion molecule L1-like protein (1208 aa).

Residues 1–24 (MEPLLLGRGLIVYLMFLLLKFSKA) form the signal peptide. Residues 25 to 1082 (IEIPSSVQQV…LYDDISTQGW (1058 aa)) lie on the Extracellular side of the membrane. Ig-like C2-type domains follow at residues 35–124 (PTII…EEIE) and 128–223 (PSVP…MKLT). 2 disulfides stabilise this stretch: C57–C109 and C153–C204. 2 N-linked (GlcNAc...) asparagine glycosylation sites follow: K231 and N299. 4 consecutive Ig-like C2-type domains span residues 235–328 (PKLL…VIVE), 331–417 (PRWT…ANID), 423–510 (PLIQ…ANLD), and 515–607 (TKLR…TQVT). 4 disulfide bridges follow: C262/C310, C352/C401, C445/C494, and C536/C591. 2 N-linked (GlcNAc...) asparagine glycosylation sites follow: N476 and N482. The short motif at 555–558 (DGEA) is the DGEA element. N562 and N580 each carry an N-linked (GlcNAc...) asparagine glycan. 4 Fibronectin type-III domains span residues 614-709 (PPEN…TPPA), 714-807 (NPQN…SGED), 809-914 (PDTA…TPEG), and 918-1015 (QPTF…LGEG). The interval 693–716 (GRSQPSQPSDHHETPPAAPDRNPQ) is disordered. N767, N822, N945, and N1026 each carry an N-linked (GlcNAc...) asparagine glycan. A helical transmembrane segment spans residues 1083–1103 (FIGLMCAIALLTLLLLTVCFV). The Cytoplasmic portion of the chain corresponds to 1104-1208 (KRNRGGKYSV…SSTATFPLRA (105 aa)). Residues 1131-1163 (ETFGEYSDSDEKPLKGSLRSLNRDMQPTESADS) form a disordered region. Phosphoserine is present on residues S1147, S1160, and S1180. A compositionally biased stretch (polar residues) spans 1149–1161 (RSLNRDMQPTESA). An FIG[AQ]Y motif is present at residues 1181–1185 (FIGAY). A disordered region spans residues 1189–1208 (KEKGSVESNGSSTATFPLRA). A compositionally biased stretch (polar residues) spans 1194–1208 (VESNGSSTATFPLRA).

It belongs to the immunoglobulin superfamily. L1/neurofascin/NgCAM family. As to quaternary structure, may interact with L1CAM. May interact with ITGB1/ITGA1 heterodimer and ITGB1/ITGA2 heterodimer as well as with ANK3. Post-translationally, cleavage by metalloprotease ADAM8 in the extracellular part generates 2 soluble forms (125 kDa and 165 kDa) in vitro and is inhibited by metalloprotease inhibitors. Cleaved by BACE1. In terms of processing, N-glycosylated. Contains N-linked oligosaccharides with a sulfated carbohydrate structure type HNK-1 (SO4-3-GlcUABeta1,3GalBeta1,4GlcNAc). O-glycosylated. In terms of tissue distribution, expressed in the fetal and adult brain as well as in Schwann cell culture. Also detected in adult peripheral tissues.

It is found in the cell membrane. The protein resides in the secreted. The protein localises to the extracellular space. Its subcellular location is the extracellular matrix. Extracellular matrix and cell adhesion protein that plays a role in nervous system development and in synaptic plasticity. Both soluble and membranous forms promote neurite outgrowth of cerebellar and hippocampal neurons and suppress neuronal cell death. Plays a role in neuronal positioning of pyramidal neurons and in regulation of both the number of interneurons and the efficacy of GABAergic synapses. May play a role in regulating cell migration in nerve regeneration and cortical development. Potentiates integrin-dependent cell migration towards extracellular matrix proteins. Recruits ANK3 to the plasma membrane. This is Neural cell adhesion molecule L1-like protein (CHL1) from Homo sapiens (Human).